The primary structure comprises 433 residues: uncharacterized protein (433 aa).

This sequence belongs to the mimivirus R160 family.

It is found in the virion. This is an uncharacterized protein from Acanthamoeba polyphaga mimivirus (APMV).